A 162-amino-acid chain; its full sequence is NADH-quinone oxidoreductase subunit I (162 aa).

4Fe-4S ferredoxin-type domains are found at residues 53–83 (LRRY…IEAE) and 93–122 (TRYD…EGPN). [4Fe-4S] cluster-binding residues include Cys63, Cys66, Cys69, Cys73, Cys102, Cys105, Cys108, and Cys112.

It belongs to the complex I 23 kDa subunit family. In terms of assembly, NDH-1 is composed of 14 different subunits. Subunits NuoA, H, J, K, L, M, N constitute the membrane sector of the complex. The cofactor is [4Fe-4S] cluster.

The protein localises to the cell inner membrane. It carries out the reaction a quinone + NADH + 5 H(+)(in) = a quinol + NAD(+) + 4 H(+)(out). Functionally, NDH-1 shuttles electrons from NADH, via FMN and iron-sulfur (Fe-S) centers, to quinones in the respiratory chain. The immediate electron acceptor for the enzyme in this species is believed to be ubiquinone. Couples the redox reaction to proton translocation (for every two electrons transferred, four hydrogen ions are translocated across the cytoplasmic membrane), and thus conserves the redox energy in a proton gradient. The polypeptide is NADH-quinone oxidoreductase subunit I (Sphingopyxis alaskensis (strain DSM 13593 / LMG 18877 / RB2256) (Sphingomonas alaskensis)).